The sequence spans 262 residues: MENSFKAALKAGRPQIGLWLGLSSSYSAELLAGAGFDWLLIDGEHTPNNVQTVLTQLQAIAPYPSQPVVRPSWNDPVQIKQLLDVGTQTLLVPMVQNADEAREAVRATRYPPAGIRGVGSALARASRWNRIPDYLQKANDQMCVLVQIETREAMKNLPQILDVEGVDGVFIGPADLSADMGYAGNPQHPEVQAAIEQAIVQIREAGKAPGILIANEQLAKRYLELGALFVAVGVDTTLLARAAEALAARFGAQATAVKPGVY.

His-45 acts as the Proton acceptor in catalysis. Gln-147 is a substrate binding site. Glu-149 provides a ligand contact to a divalent metal cation. 2 residues coordinate substrate: Ala-174 and Asp-175. Residue Asp-175 coordinates a divalent metal cation.

This sequence belongs to the HpcH/HpaI aldolase family. As to quaternary structure, homohexamer; trimer of dimers. The cofactor is a divalent metal cation.

It catalyses the reaction 4-hydroxy-2-oxoheptanedioate = succinate semialdehyde + pyruvate. It participates in aromatic compound metabolism; 4-hydroxyphenylacetate degradation; pyruvate and succinate semialdehyde from 4-hydroxyphenylacetate: step 7/7. Its function is as follows. Catalyzes the reversible retro-aldol cleavage of 4-hydroxy-2-ketoheptane-1,7-dioate (HKHD) to pyruvate and succinic semialdehyde. This chain is 4-hydroxy-2-oxo-heptane-1,7-dioate aldolase, found in Shigella sonnei (strain Ss046).